We begin with the raw amino-acid sequence, 179 residues long: Large ribosomal subunit protein uL6 (179 aa).

Belongs to the universal ribosomal protein uL6 family. As to quaternary structure, part of the 50S ribosomal subunit.

Its function is as follows. This protein binds to the 23S rRNA, and is important in its secondary structure. It is located near the subunit interface in the base of the L7/L12 stalk, and near the tRNA binding site of the peptidyltransferase center. In Spiroplasma kunkelii, this protein is Large ribosomal subunit protein uL6.